The primary structure comprises 249 residues: Isoprenyl transferase (249 aa).

Aspartate 25 is a catalytic residue. A Mg(2+)-binding site is contributed by aspartate 25. Substrate-binding positions include 26–29 (GNGR), tryptophan 30, arginine 38, histidine 42, and 70–72 (STE). Residue asparagine 73 is the Proton acceptor of the active site. Substrate-binding positions include tryptophan 74, arginine 76, arginine 197, and 203 to 205 (RLS). Glutamate 216 provides a ligand contact to Mg(2+).

This sequence belongs to the UPP synthase family. As to quaternary structure, homodimer. It depends on Mg(2+) as a cofactor.

Its function is as follows. Catalyzes the condensation of isopentenyl diphosphate (IPP) with allylic pyrophosphates generating different type of terpenoids. This chain is Isoprenyl transferase, found in Streptococcus thermophilus (strain CNRZ 1066).